Here is a 448-residue protein sequence, read N- to C-terminus: U1 small nuclear ribonucleoprotein 70 kDa (448 aa).

Positions 91 to 201 (TEIKNATEDP…GGGLGGTRRG (111 aa)) are required for interaction with U1 RNA. In terms of domain architecture, RRM spans 102–180 (RTLFIARINY…KRVLVDVERA (79 aa)). The tract at residues 188-448 (PRRLGGGLGG…SSGDPSWWRQ (261 aa)) is disordered. A compositionally biased stretch (gly residues) spans 191 to 200 (LGGGLGGTRR). 2 stretches are compositionally biased toward basic and acidic residues: residues 206–234 (NIKH…REGP) and 262–272 (ERRDRERDRGR). A compositionally biased stretch (basic residues) spans 281-293 (SRSRSRERRKRRA). Basic and acidic residues-rich tracts occupy residues 294–320 (GSRE…DRER) and 346–376 (RDRE…IKEE). Positions 405 to 425 (RPPPAHHNMFSVPPPPILGRG) are mediates binding to Psi. The segment covering 426 to 448 (NASTNPNPDNGQQSSGDPSWWRQ) has biased composition (polar residues).

In terms of assembly, component of the U1 snRNP. Interacts with Psi; essential for alternative splicing of P-element transposase. Interacts with the SMN complex.

Its subcellular location is the nucleus speckle. The protein localises to the nucleus. It localises to the nucleoplasm. Functionally, mediates the splicing of pre-mRNA by binding to the stem loop I region of U1-snRNA. Required during oogenesis for nurse cell chromatin dispersal. The sequence is that of U1 small nuclear ribonucleoprotein 70 kDa (snRNP-U1-70K) from Drosophila melanogaster (Fruit fly).